We begin with the raw amino-acid sequence, 235 residues long: Segregation and condensation protein A (235 aa).

This sequence belongs to the ScpA family. Component of a cohesin-like complex composed of ScpA, ScpB and the Smc homodimer, in which ScpA and ScpB bind to the head domain of Smc. The presence of the three proteins is required for the association of the complex with DNA.

It localises to the cytoplasm. Participates in chromosomal partition during cell division. May act via the formation of a condensin-like complex containing Smc and ScpB that pull DNA away from mid-cell into both cell halves. The polypeptide is Segregation and condensation protein A (Streptococcus agalactiae serotype Ia (strain ATCC 27591 / A909 / CDC SS700)).